The chain runs to 304 residues: Glutaminase (304 aa).

S61, N113, E158, N165, Y189, Y240, and V258 together coordinate substrate.

The protein belongs to the glutaminase family. As to quaternary structure, homotetramer.

The enzyme catalyses L-glutamine + H2O = L-glutamate + NH4(+). This is Glutaminase from Fusobacterium nucleatum subsp. nucleatum (strain ATCC 25586 / DSM 15643 / BCRC 10681 / CIP 101130 / JCM 8532 / KCTC 2640 / LMG 13131 / VPI 4355).